A 242-amino-acid chain; its full sequence is MKVSLFITCLSDVFFPQVGKSVVEIMNQCGVELDFPEGQTCCGQPAYNSGYQEDAKLAAKQMIKAFEHSEYIVTPSGSCASMVHHYYKEMFKGDSEWYEKAVHLADRTYELTDFLVNVLGKNDWKSKLVEKAVFHQSCHMSRALGIKEEPLKLLSQVEGLDIKELPYCQDCCGFGGTFAVKMSSISETMVDEKIKHIEATEANLLIGADMGCLMNIGGRLRRKNKNIQVLHVAEVLAKGLNK.

This sequence belongs to the LutA/YkgE family.

Its function is as follows. Is involved in L-lactate degradation and allows cells to grow with lactate as the sole carbon source. The chain is Lactate utilization protein A 2 from Bacillus cereus (strain 03BB102).